The following is a 501-amino-acid chain: Glycerol kinase (501 aa).

Position 12 (Thr-12) interacts with ADP. Thr-12, Thr-13, and Ser-14 together coordinate ATP. Thr-12 is a sn-glycerol 3-phosphate binding site. Position 16 (Arg-16) interacts with ADP. 4 residues coordinate sn-glycerol 3-phosphate: Arg-82, Glu-83, Tyr-135, and Asp-244. Residues Arg-82, Glu-83, Tyr-135, Asp-244, and Gln-245 each coordinate glycerol. Residues Thr-266, Gly-309, Gly-409, and Asn-413 each coordinate ADP. ATP is bound by residues Thr-266, Gly-309, and Gly-409.

This sequence belongs to the FGGY kinase family.

The enzyme catalyses glycerol + ATP = sn-glycerol 3-phosphate + ADP + H(+). It participates in polyol metabolism; glycerol degradation via glycerol kinase pathway; sn-glycerol 3-phosphate from glycerol: step 1/1. With respect to regulation, inhibited by fructose 1,6-bisphosphate (FBP). Functionally, key enzyme in the regulation of glycerol uptake and metabolism. Catalyzes the phosphorylation of glycerol to yield sn-glycerol 3-phosphate. This chain is Glycerol kinase, found in Coxiella burnetii (strain Dugway 5J108-111).